Reading from the N-terminus, the 288-residue chain is Pantothenate synthetase (288 aa).

Residue 27-34 (MGALHEGH) coordinates ATP. The Proton donor role is filled by histidine 34. Residues glutamine 58 and glutamine 150 each contribute to the (R)-pantoate site. Glutamine 58 provides a ligand contact to beta-alanine. ATP-binding positions include leucine 173 and 181–184 (YSSR).

Belongs to the pantothenate synthetase family. As to quaternary structure, homodimer.

The protein resides in the cytoplasm. The catalysed reaction is (R)-pantoate + beta-alanine + ATP = (R)-pantothenate + AMP + diphosphate + H(+). It participates in cofactor biosynthesis; (R)-pantothenate biosynthesis; (R)-pantothenate from (R)-pantoate and beta-alanine: step 1/1. Functionally, catalyzes the condensation of pantoate with beta-alanine in an ATP-dependent reaction via a pantoyl-adenylate intermediate. The chain is Pantothenate synthetase from Tropheryma whipplei (strain TW08/27) (Whipple's bacillus).